A 584-amino-acid chain; its full sequence is MTLKPVLLAFLVASAYAQYGVAGMYENLPLETTTLDGSGDGSGADNGFVSGADAVAIDTDCSTKEDGLYAIGGCSPQFLTCSGGISRIMDCPADLIYDPRIVACEYSYNVPQCGGVPQDVTSTQEAYPSEETTVNPYAPVEEATTTPAEDVTVPEETTTEAYAPVDDYSTTTPAEDVPVPVETTASPYAPIVPYTTGAPAADEPVTRSAVTKSCVGKADGFYSFGECSDHYTACSNGYLIPMQCPARLAFDEARVICDYVMNVPECTNGSGNDEGSADETTPESSGEMPYSNGYGYEETTTVAEDVPSTKDYAEPIAAAYVARYPSEKTTAENVPTTTIGYEPEVVETTAPYVEETTTTVGYKPEVEETTTEAEVPTTTVGYEPEIVETTAPYVEETTTAADVPSTTAVYEPEVVETTTEAEVPTTTTVGYEPEVVETTVPYVEETTTAADVPTTTVGYEPEVEETTTEAEVPTTTVGYESEVVETTAADIPTTTIGYAPIVVESTTAADVPTTTVPAETTTEVPACVEGATAIEPCSQHYKNCVNGQEAIFICENGLFFSPEQARCAPADQIAECHQTTVQYY.

The N-terminal stretch at 1–17 (MTLKPVLLAFLVASAYA) is a signal peptide. A glycan (O-linked (Xyl...) (chondroitin sulfate) serine) is linked at Ser50. Chitin-binding type-2 domains are found at residues 58–115 (DTDC…QCGG), 211–268 (TKSC…ECTN), and 524–578 (VPAC…ECHQ). 2 cysteine pairs are disulfide-bonded: Cys91-Cys104 and Cys244-Cys257. The tract at residues 267–295 (TNGSGNDEGSADETTPESSGEMPYSNGYG) is disordered. Residue Asn268 is glycosylated (N-linked (GlcNAc...) asparagine). An intrachain disulfide couples Cys554 to Cys567.

Expressed in the germline.

Its function is as follows. Required for polar body extrusion during cytokinesis in embryo development. Affects cortical granule size. Has roles in meiotic chromosome segregation, osmotic barrier function and polarization in conjunction with cpg-2. Binds chitin. The protein is Chondroitin proteoglycan 1 (cpg-1) of Caenorhabditis elegans.